A 426-amino-acid polypeptide reads, in one-letter code: Transcriptional enhancer factor TEF-1 (426 aa).

Met-1 bears the N-acetylmethionine mark. The segment covering 1–12 (MEPSSWSGSESP) has biased composition (polar residues). The interval 1–31 (MEPSSWSGSESPAENMERMSDSADKPIDNDA) is disordered. A Phosphoserine modification is found at Ser-11. Positions 15–28 (NMERMSDSADKPID) are enriched in basic and acidic residues. The TEA DNA-binding region spans 28–104 (DNDAEGVWSP…QVLARRKSRD (77 aa)). Residue Lys-108 is modified to N6-lactoyllysine. The interval 167-426 (GSSQDVKPFV…QHHIYRLVKD (260 aa)) is transcriptional activation.

Interacts with YAP1 and WWTR1/TAZ. Lactylation by AARS1 promotes nuclear localization and stabilization of YAP1, leading to increased Hippo signaling pathway. Delactylated by SIRT1. In terms of tissue distribution, preferentially expressed in skeletal muscle. Lower levels in pancreas, placenta, and heart.

The protein localises to the nucleus. Transcription factor which plays a key role in the Hippo signaling pathway, a pathway involved in organ size control and tumor suppression by restricting proliferation and promoting apoptosis. The core of this pathway is composed of a kinase cascade wherein MST1/MST2, in complex with its regulatory protein SAV1, phosphorylates and activates LATS1/2 in complex with its regulatory protein MOB1, which in turn phosphorylates and inactivates YAP1 oncoprotein and WWTR1/TAZ. Acts by mediating gene expression of YAP1 and WWTR1/TAZ, thereby regulating cell proliferation, migration and epithelial mesenchymal transition (EMT) induction. Binds specifically and cooperatively to the SPH and GT-IIC 'enhansons' (5'-GTGGAATGT-3') and activates transcription in vivo in a cell-specific manner. The activation function appears to be mediated by a limiting cell-specific transcriptional intermediary factor (TIF). Involved in cardiac development. Binds to the M-CAT motif. The protein is Transcriptional enhancer factor TEF-1 (TEAD1) of Homo sapiens (Human).